The sequence spans 60 residues: UPF0434 protein ESA_02427 (60 aa).

This sequence belongs to the UPF0434 family.

The polypeptide is UPF0434 protein ESA_02427 (Cronobacter sakazakii (strain ATCC BAA-894) (Enterobacter sakazakii)).